Reading from the N-terminus, the 254-residue chain is MADIYFVGLGLSKRFLTNASLEVLKGSDVIYADIYTSISCDINEKTLREITGKEIIPATREVLETKEKEIYKLLDSGKNVAIAVVGDPMIATTHVSLATGARARGHRVSVIPGVSVHCYMISRSMLSSYKFGKSVTVTFPVLDKLDYTPYRVIKTNRELGLHTMVYLDLKETGIMTADLALNYLKKMESDIGDKVILDDDLVVIGERLGCADERVRAMKVVDALNQKFGAPPHIIIVPSRNLYEMEVEGLKCLS.

S-adenosyl-L-methionine contacts are provided by residues Leu-11, Asp-87, Ile-90, 115 to 116 (SV), Leu-167, Leu-208, and His-233.

Belongs to the diphthine synthase family. As to quaternary structure, homodimer.

The enzyme catalyses 2-[(3S)-amino-3-carboxypropyl]-L-histidyl-[translation elongation factor 2] + 3 S-adenosyl-L-methionine = diphthine-[translation elongation factor 2] + 3 S-adenosyl-L-homocysteine + 3 H(+). It participates in protein modification; peptidyl-diphthamide biosynthesis. S-adenosyl-L-methionine-dependent methyltransferase that catalyzes the trimethylation of the amino group of the modified target histidine residue in translation elongation factor 2 (EF-2), to form an intermediate called diphthine. The three successive methylation reactions represent the second step of diphthamide biosynthesis. This chain is Diphthine synthase, found in Metallosphaera sedula (strain ATCC 51363 / DSM 5348 / JCM 9185 / NBRC 15509 / TH2).